We begin with the raw amino-acid sequence, 191 residues long: Octanoyltransferase (191 aa).

The 176-residue stretch at 10-185 (ENSHDEIWLV…NILALLNNPP (176 aa)) folds into the BPL/LPL catalytic domain. Substrate-binding positions include 49–56 (RGGQVTYH), 116–118 (SLG), and 129–131 (GLA). The active-site Acyl-thioester intermediate is cysteine 147.

It belongs to the LipB family.

It localises to the cytoplasm. The catalysed reaction is octanoyl-[ACP] + L-lysyl-[protein] = N(6)-octanoyl-L-lysyl-[protein] + holo-[ACP] + H(+). It functions in the pathway protein modification; protein lipoylation via endogenous pathway; protein N(6)-(lipoyl)lysine from octanoyl-[acyl-carrier-protein]: step 1/2. Catalyzes the transfer of endogenously produced octanoic acid from octanoyl-acyl-carrier-protein onto the lipoyl domains of lipoate-dependent enzymes. Lipoyl-ACP can also act as a substrate although octanoyl-ACP is likely to be the physiological substrate. This Salmonella choleraesuis (strain SC-B67) protein is Octanoyltransferase.